A 353-amino-acid polypeptide reads, in one-letter code: MKSIAQEHDCLLIDLDGTVFCGRQPTGGAVQSLSQVRSRKLFVTNNASRSADEVAAHLCELGFTATGEDVVTSAQSAAHLLAGQLAPGARVLIVGTEALANEVAAVGLRPVRRFEDRPDAVVQGLSMTTGWSDLAEAALAIRAGALWVAANVDPTLPTERGLLPGNGSMVAALRTATGMDPRVAGKPAPALMTEAVARGDFRAALVVGDRLDTDIEGANAAGLPSLMVLTGVNSAWDAVYAEPVRRPTYIGHDLRSLHQDSKLLAVAPQPGWQIDVGGGAVTVCANGDVDDLEFIDDGLSIVRAVASAVWEARAADLHQRPLRIEAGDERARAALQRWSLMRSDHPVTSVGTQ.

D14 functions as the Nucleophile in the catalytic mechanism. D14, D16, and D209 together coordinate Mg(2+). Catalysis depends on D16, which acts as the Proton donor.

The protein belongs to the HAD-like hydrolase superfamily. As to quaternary structure, homodimer. Mg(2+) is required as a cofactor. The cofactor is Co(2+). It depends on Mn(2+) as a cofactor.

The enzyme catalyses sn-glycerol 1-phosphate + H2O = glycerol + phosphate. Its pathway is glycerolipid metabolism. In terms of biological role, dephosphorylates D-glycerol 3-phosphate (sn-glycerol 1-phosphate). Is the final enzyme involved in the recycling/catabolism of glycerophospholipid polar heads. To a lesser extent, is also able to act on glycerol 2-phosphate and D-ribulose 5-phosphate, but cannot use D-glyceraldehyde 3-phosphate, dihydroxyacetone-phosphate, UMP or GMP as substrates. The polypeptide is D-glycerol 3-phosphate phosphatase (Mycobacterium tuberculosis (strain ATCC 25618 / H37Rv)).